Reading from the N-terminus, the 475-residue chain is Ribulose bisphosphate carboxylase large chain (475 aa).

Residues 1-2 constitute a propeptide that is removed on maturation; the sequence is MS. Position 3 is an N-acetylproline (P3). K14 is subject to N6,N6,N6-trimethyllysine. The substrate site is built by N123 and T173. Catalysis depends on K175, which acts as the Proton acceptor. Substrate is bound at residue K177. Positions 201, 203, and 204 each coordinate Mg(2+). At K201 the chain carries N6-carboxylysine. Catalysis depends on H294, which acts as the Proton acceptor. Substrate is bound by residues R295, H327, and S379.

This sequence belongs to the RuBisCO large chain family. Type I subfamily. As to quaternary structure, heterohexadecamer of 8 large chains and 8 small chains; disulfide-linked. The disulfide link is formed within the large subunit homodimers. The cofactor is Mg(2+). The disulfide bond which can form in the large chain dimeric partners within the hexadecamer appears to be associated with oxidative stress and protein turnover.

The protein localises to the plastid. It localises to the chloroplast. It carries out the reaction 2 (2R)-3-phosphoglycerate + 2 H(+) = D-ribulose 1,5-bisphosphate + CO2 + H2O. The catalysed reaction is D-ribulose 1,5-bisphosphate + O2 = 2-phosphoglycolate + (2R)-3-phosphoglycerate + 2 H(+). RuBisCO catalyzes two reactions: the carboxylation of D-ribulose 1,5-bisphosphate, the primary event in carbon dioxide fixation, as well as the oxidative fragmentation of the pentose substrate in the photorespiration process. Both reactions occur simultaneously and in competition at the same active site. This Alnus incana (White alder) protein is Ribulose bisphosphate carboxylase large chain.